The chain runs to 452 residues: uncharacterized protein (452 aa).

This is an uncharacterized protein from Chlamydia pneumoniae (Chlamydophila pneumoniae).